Reading from the N-terminus, the 299-residue chain is MSAVPDAFQRYGAESLAQAPAFGPGKDGVFEATLARTGDRDTRLLRDYTKVPYHLTGTLDTDPAPGLTTLCLQEPTGGVAQGDRHSITVTAREGARARVTTQSATKVHSMQANYAHLDATLEAGPDAHLEYVPGPTIVNEDARCLQTVAVDLAPSATVVVADVFVPGGLSAHEPFDFDHYHSRLEARCEERLVCADAVDLHPADGDPRDPATVADYDVVGTLYVLAPEADTEVLAEAIHARFDAHDAVTAGVSALPYESGVSVRVLGTRSADVTDAVRDAWDASRQELLGVGIPADRRY.

This sequence belongs to the UreD family. UreD, UreF and UreG form a complex that acts as a GTP-hydrolysis-dependent molecular chaperone, activating the urease apoprotein by helping to assemble the nickel containing metallocenter of UreC. The UreE protein probably delivers the nickel.

It is found in the cytoplasm. Required for maturation of urease via the functional incorporation of the urease nickel metallocenter. The polypeptide is Urease accessory protein UreD (Natronomonas pharaonis (strain ATCC 35678 / DSM 2160 / CIP 103997 / JCM 8858 / NBRC 14720 / NCIMB 2260 / Gabara) (Halobacterium pharaonis)).